Here is a 444-residue protein sequence, read N- to C-terminus: ATP-dependent protease ATPase subunit HslU (444 aa).

ATP contacts are provided by residues isoleucine 20 and 62–67 (GVGKTE). A disordered region spans residues 130–158 (EDRILDALVPPPRGASGEPERGEDNSARQ). Aspartate 257, glutamate 322, and arginine 394 together coordinate ATP.

It belongs to the ClpX chaperone family. HslU subfamily. A double ring-shaped homohexamer of HslV is capped on each side by a ring-shaped HslU homohexamer. The assembly of the HslU/HslV complex is dependent on binding of ATP.

It is found in the cytoplasm. Functionally, ATPase subunit of a proteasome-like degradation complex; this subunit has chaperone activity. The binding of ATP and its subsequent hydrolysis by HslU are essential for unfolding of protein substrates subsequently hydrolyzed by HslV. HslU recognizes the N-terminal part of its protein substrates and unfolds these before they are guided to HslV for hydrolysis. The chain is ATP-dependent protease ATPase subunit HslU from Bordetella parapertussis (strain 12822 / ATCC BAA-587 / NCTC 13253).